A 63-amino-acid chain; its full sequence is Large ribosomal subunit protein bL32 (63 aa).

The interval 1 to 22 (MANPKAKMSKSRRDKRRAQFNA) is disordered. The segment covering 7 to 18 (KMSKSRRDKRRA) has biased composition (basic residues).

It belongs to the bacterial ribosomal protein bL32 family.

In Chlorobium limicola (strain DSM 245 / NBRC 103803 / 6330), this protein is Large ribosomal subunit protein bL32.